A 521-amino-acid chain; its full sequence is MPTPLPSSSAWLAFADAARHSSRRGARLRVIEAAGLRVDLTAQAHSDDLDSAAEDLLAQQDFDNARAQLFDGGPANWTEHRPAWHTALRAARPPTPVAGAILGERDRLRRFVQDADMRGAYRHVLHLGIGGSDWGPRMVTRALRHNGLKREVRFASNVDSHAVADALHHLDPHDTLIIVASKSFTTTEPLANAEVAMNWLRNAGVADPVRQVVAITANVDAALDFGISPQHIFRFWDWVGGRYSLWSAIGLPVALALGCDALDELLAGAAAMDQHFLHTPMRRNAPLQMALAGVANRSVLGYGSLAITPYDSRLTHLVPWAQQLEMESLGKVAGHDGSPAGVPTGPVVWGMTGTDCQHTFFQWLHQDTAGAPVDFIVCEQADHPYDHFHKLLIANCLAQRAALLRGKPFDEALKEARLVESDPQQAEILAHHRVHPGGRPSTLIMLPRLSAHALGALLAMYEHKVFAQGVLWGINPFDQWGVEYGKALARNIIRELENPSSEVNQQDPSTRYWIDALRKQP.

The active-site Proton donor is glutamate 327. Catalysis depends on residues histidine 358 and lysine 486.

Belongs to the GPI family.

It is found in the cytoplasm. The catalysed reaction is alpha-D-glucose 6-phosphate = beta-D-fructose 6-phosphate. The protein operates within carbohydrate biosynthesis; gluconeogenesis. Its pathway is carbohydrate degradation; glycolysis; D-glyceraldehyde 3-phosphate and glycerone phosphate from D-glucose: step 2/4. Functionally, catalyzes the reversible isomerization of glucose-6-phosphate to fructose-6-phosphate. This is Glucose-6-phosphate isomerase from Bordetella bronchiseptica (strain ATCC BAA-588 / NCTC 13252 / RB50) (Alcaligenes bronchisepticus).